Reading from the N-terminus, the 598-residue chain is MIEGSGSKTPKRNSDEISVKSLSIHEANTLSSEHEHESGNEELTLSQIVIRSDFANESSERQSKIILDRFNQGIGKNSAFTDSPALGRGLSRVDVSYFVMGHRNQVAELYDPRGQRFSTVLTPDPTVNIKYVGPVSKTAHYFGAYGKHVLNVPAGHYAKAFSKNRPVLYGEGPHVIIDPTFQFDENNGFVNQQEPFIEHSTINILRIPAGKIAKVWIGTQPHILESRRDPYVFVDAQFKLVSPDGAKKAQLFESSSCTFVEHGSIKRIIPHTGEVAITYNNGILTIIPTPKDGKPVIIDSPTHNFEGFISTSLQTCLFPSKETKQQALADNKSALADEINLKIFQTRDSLRVGVVLVVAFKIVDPELAITKLGKEGIINHIENVSFADMGKAIQLSTLQEIMYFNSIKPGQATNDDSVQTIQDRVKSHLARDLFDYGVELSRLQIETMKVLDTEIAKKLAGQSVTSAEFTTKQATLVKEYDIKTTEARLKAETDNIALEQRNKAIISESQAKLSSAQREAESLLITAEAQKKASELQGELYTKYPILAEIELARIKAEALKNATLYITPQDAGAFMNSPLVYFDKMMNANNTIQQKKN.

Positions 482–539 form a coiled coil; that stretch reads IKTTEARLKAETDNIALEQRNKAIISESQAKLSSAQREAESLLITAEAQKKASELQGE.

Belongs to the vacuolin family.

Its subcellular location is the endosome membrane. The protein resides in the lysosome. The protein is Vacuolin-A (vacA) of Dictyostelium discoideum (Social amoeba).